The primary structure comprises 280 residues: NAD(P)H-quinone oxidoreductase subunit K, chloroplastic (280 aa).

[4Fe-4S] cluster contacts are provided by cysteine 65, cysteine 66, cysteine 130, and cysteine 161. Positions 257–280 are disordered; the sequence is LLKDWKQSNQKQEQNVKMMKEEEA.

This sequence belongs to the complex I 20 kDa subunit family. In terms of assembly, NDH is composed of at least 16 different subunits, 5 of which are encoded in the nucleus. It depends on [4Fe-4S] cluster as a cofactor.

The protein localises to the plastid. It is found in the chloroplast thylakoid membrane. It catalyses the reaction a plastoquinone + NADH + (n+1) H(+)(in) = a plastoquinol + NAD(+) + n H(+)(out). The enzyme catalyses a plastoquinone + NADPH + (n+1) H(+)(in) = a plastoquinol + NADP(+) + n H(+)(out). NDH shuttles electrons from NAD(P)H:plastoquinone, via FMN and iron-sulfur (Fe-S) centers, to quinones in the photosynthetic chain and possibly in a chloroplast respiratory chain. The immediate electron acceptor for the enzyme in this species is believed to be plastoquinone. Couples the redox reaction to proton translocation, and thus conserves the redox energy in a proton gradient. This chain is NAD(P)H-quinone oxidoreductase subunit K, chloroplastic, found in Staurastrum punctulatum (Green alga).